The primary structure comprises 470 residues: 3-isopropylmalate dehydratase large subunit (470 aa).

3 residues coordinate [4Fe-4S] cluster: C349, C409, and C412.

It belongs to the aconitase/IPM isomerase family. LeuC type 1 subfamily. In terms of assembly, heterodimer of LeuC and LeuD. Requires [4Fe-4S] cluster as cofactor.

The catalysed reaction is (2R,3S)-3-isopropylmalate = (2S)-2-isopropylmalate. Its pathway is amino-acid biosynthesis; L-leucine biosynthesis; L-leucine from 3-methyl-2-oxobutanoate: step 2/4. Functionally, catalyzes the isomerization between 2-isopropylmalate and 3-isopropylmalate, via the formation of 2-isopropylmaleate. This Afipia carboxidovorans (strain ATCC 49405 / DSM 1227 / KCTC 32145 / OM5) (Oligotropha carboxidovorans) protein is 3-isopropylmalate dehydratase large subunit.